The following is a 664-amino-acid chain: Protein LYK5 (664 aa).

Positions Met1–Ala26 are cleaved as a signal peptide. The Extracellular segment spans residues Gln27 to Lys277. 5 N-linked (GlcNAc...) asparagine glycosylation sites follow: Asn45, Asn81, Asn111, Asn125, and Asn129. Cystine bridges form between Cys52-Cys114, Cys58-Cys181, and Cys112-Cys179. Gly135–Ser141 lines the chitin pocket. An N-linked (GlcNAc...) asparagine glycan is attached at Asn144. Residue Glu164–Gly170 participates in chitin binding. Residues Leu195–Val238 form the LysM domain. A glycan (N-linked (GlcNAc...) asparagine) is linked at Asn213. The segment covering Pro251–Pro269 has biased composition (pro residues). Residues Pro251–Pro270 are disordered. The chain crosses the membrane as a helical span at residues Trp278–Leu298. Topologically, residues Cys299–Asn664 are cytoplasmic. The Protein kinase domain occupies Lys351–Ile643. Residues Leu357–Leu365 and Lys395 contribute to the ATP site.

The protein belongs to the protein kinase superfamily. Ser/Thr protein kinase family.

It is found in the cell membrane. Its function is as follows. May recognize microbe-derived N-acetylglucosamine (NAG)-containing ligands. The polypeptide is Protein LYK5 (LYK5) (Arabidopsis thaliana (Mouse-ear cress)).